The following is a 705-amino-acid chain: Ribosomal RNA large subunit methyltransferase K/L (705 aa).

The THUMP domain maps to 43 to 154 (VVYRCCLWSR…GEKGILGFDL (112 aa)).

This sequence belongs to the methyltransferase superfamily. RlmKL family.

The protein resides in the cytoplasm. It carries out the reaction guanosine(2445) in 23S rRNA + S-adenosyl-L-methionine = N(2)-methylguanosine(2445) in 23S rRNA + S-adenosyl-L-homocysteine + H(+). The enzyme catalyses guanosine(2069) in 23S rRNA + S-adenosyl-L-methionine = N(2)-methylguanosine(2069) in 23S rRNA + S-adenosyl-L-homocysteine + H(+). In terms of biological role, specifically methylates the guanine in position 2445 (m2G2445) and the guanine in position 2069 (m7G2069) of 23S rRNA. This is Ribosomal RNA large subunit methyltransferase K/L from Aliivibrio fischeri (strain MJ11) (Vibrio fischeri).